The chain runs to 336 residues: Holliday junction branch migration complex subunit RuvB (336 aa).

The interval 4 to 184 is large ATPase domain (RuvB-L); that stretch reads ADRLISAGAT…FGIVQRLEFY (181 aa). ATP contacts are provided by residues Ile-23, Arg-24, Gly-65, Lys-68, Thr-69, Thr-70, 131 to 133, Arg-174, Tyr-184, and Arg-221; that span reads EDY. Thr-69 serves as a coordination point for Mg(2+). The small ATPAse domain (RuvB-S) stretch occupies residues 185-255; it reads QVPDLQHIVG…IAAQALDMLN (71 aa). Residues 258 to 336 are head domain (RuvB-H); the sequence is AEGFDYMDRK…HFGITPPEMP (79 aa). 3 residues coordinate DNA: Arg-294, Arg-313, and Arg-318.

The protein belongs to the RuvB family. As to quaternary structure, homohexamer. Forms an RuvA(8)-RuvB(12)-Holliday junction (HJ) complex. HJ DNA is sandwiched between 2 RuvA tetramers; dsDNA enters through RuvA and exits via RuvB. An RuvB hexamer assembles on each DNA strand where it exits the tetramer. Each RuvB hexamer is contacted by two RuvA subunits (via domain III) on 2 adjacent RuvB subunits; this complex drives branch migration. In the full resolvosome a probable DNA-RuvA(4)-RuvB(12)-RuvC(2) complex forms which resolves the HJ.

Its subcellular location is the cytoplasm. It catalyses the reaction ATP + H2O = ADP + phosphate + H(+). Its function is as follows. The RuvA-RuvB-RuvC complex processes Holliday junction (HJ) DNA during genetic recombination and DNA repair, while the RuvA-RuvB complex plays an important role in the rescue of blocked DNA replication forks via replication fork reversal (RFR). RuvA specifically binds to HJ cruciform DNA, conferring on it an open structure. The RuvB hexamer acts as an ATP-dependent pump, pulling dsDNA into and through the RuvAB complex. RuvB forms 2 homohexamers on either side of HJ DNA bound by 1 or 2 RuvA tetramers; 4 subunits per hexamer contact DNA at a time. Coordinated motions by a converter formed by DNA-disengaged RuvB subunits stimulates ATP hydrolysis and nucleotide exchange. Immobilization of the converter enables RuvB to convert the ATP-contained energy into a lever motion, pulling 2 nucleotides of DNA out of the RuvA tetramer per ATP hydrolyzed, thus driving DNA branch migration. The RuvB motors rotate together with the DNA substrate, which together with the progressing nucleotide cycle form the mechanistic basis for DNA recombination by continuous HJ branch migration. Branch migration allows RuvC to scan DNA until it finds its consensus sequence, where it cleaves and resolves cruciform DNA. In Salmonella choleraesuis (strain SC-B67), this protein is Holliday junction branch migration complex subunit RuvB.